The sequence spans 215 residues: ATP-dependent Clp protease proteolytic subunit 1 (215 aa).

S108 (nucleophile) is an active-site residue. H133 is an active-site residue.

Belongs to the peptidase S14 family. In terms of assembly, fourteen ClpP subunits assemble into 2 heptameric rings which stack back to back to give a disk-like structure with a central cavity, resembling the structure of eukaryotic proteasomes.

The protein resides in the cytoplasm. The enzyme catalyses Hydrolysis of proteins to small peptides in the presence of ATP and magnesium. alpha-casein is the usual test substrate. In the absence of ATP, only oligopeptides shorter than five residues are hydrolyzed (such as succinyl-Leu-Tyr-|-NHMec, and Leu-Tyr-Leu-|-Tyr-Trp, in which cleavage of the -Tyr-|-Leu- and -Tyr-|-Trp bonds also occurs).. Its function is as follows. Cleaves peptides in various proteins in a process that requires ATP hydrolysis. Has a chymotrypsin-like activity. Plays a major role in the degradation of misfolded proteins. This Paraburkholderia xenovorans (strain LB400) protein is ATP-dependent Clp protease proteolytic subunit 1.